Consider the following 119-residue polypeptide: Protein TusC (119 aa).

This sequence belongs to the DsrF/TusC family. In terms of assembly, heterohexamer, formed by a dimer of trimers. The hexameric TusBCD complex contains 2 copies each of TusB, TusC and TusD. The TusBCD complex interacts with TusE.

Its subcellular location is the cytoplasm. In terms of biological role, part of a sulfur-relay system required for 2-thiolation of 5-methylaminomethyl-2-thiouridine (mnm(5)s(2)U) at tRNA wobble positions. In Pectobacterium carotovorum subsp. carotovorum (strain PC1), this protein is Protein TusC.